An 877-amino-acid polypeptide reads, in one-letter code: DNA polymerase I (877 aa).

One can recognise a 5'-3' exonuclease domain in the interval 177 to 270 (TPAQFIDLKA…LEDLVYSGPD (94 aa)). In terms of domain architecture, 3'-5' exonuclease spans 302-465 (DFTIVDQISQ…TEPILLEKLS (164 aa)).

Belongs to the DNA polymerase type-A family. In terms of assembly, single-chain monomer with multiple functions.

The catalysed reaction is DNA(n) + a 2'-deoxyribonucleoside 5'-triphosphate = DNA(n+1) + diphosphate. In addition to polymerase activity, this DNA polymerase exhibits 3'-5' and 5'-3' exonuclease activity. The chain is DNA polymerase I (polA) from Streptococcus pneumoniae (strain ATCC BAA-255 / R6).